A 236-amino-acid polypeptide reads, in one-letter code: 2-C-methyl-D-erythritol 4-phosphate cytidylyltransferase (236 aa).

It belongs to the IspD/TarI cytidylyltransferase family. IspD subfamily. Homodimer.

The catalysed reaction is 2-C-methyl-D-erythritol 4-phosphate + CTP + H(+) = 4-CDP-2-C-methyl-D-erythritol + diphosphate. Its pathway is isoprenoid biosynthesis; isopentenyl diphosphate biosynthesis via DXP pathway; isopentenyl diphosphate from 1-deoxy-D-xylulose 5-phosphate: step 2/6. Functionally, catalyzes the formation of 4-diphosphocytidyl-2-C-methyl-D-erythritol from CTP and 2-C-methyl-D-erythritol 4-phosphate (MEP). The sequence is that of 2-C-methyl-D-erythritol 4-phosphate cytidylyltransferase from Salmonella heidelberg (strain SL476).